Consider the following 305-residue polypeptide: MDGKALTASSLFDITGRVAVITGGGTGLGLMMAKALEANGAKVYILGRRLEPLQEAAKQSTHGNIHPVQCSVTSHADLQGVVDHIAAKDGYINLLVNNAGISTPNLGPHATRPTPKWDISKVRDYWFHKSFADYAAVFETNTTASLMVTFAFLELLDKGNKKSEEEAKASQARNGAGKARIEYVRSQVVTLSSVGGFGRDNSAFIYGASKAAATHMMKNLATYLAPWKIRVNVIAPGYFNTDMMGNFYKATGGRLPASLAPEERFGDAQEIGGTIVYLASKAGAYCNGMVLLVDGGYVSNKPSSY.

Residues Leu28 and Asn98 each contribute to the NADP(+) site. Ser192 serves as the catalytic Proton donor. Positions 206, 210, and 241 each coordinate NADP(+). The active-site Proton acceptor is Tyr206. Lys210 serves as the catalytic Lowers pKa of active site Tyr.

The protein belongs to the short-chain dehydrogenases/reductases (SDR) family.

It carries out the reaction methyl 2-[(3S)-9,10-dihydroxy-7-methoxy-1-oxo-1H,3H,4H-naphtho[2,3-c]pyran-3-yl]acetate + AH2 = semiviriditoxin + A. The catalysed reaction is 9,10-dihydroxy-7-methoxy-3-(2-oxopropyl)-1H-benzo[g]isochromen-1-one + AH2 = (3S)-9,10-dihydroxy-7-methoxy-3-(2-oxopropyl)-1H,3H,4H-naphtho[2,3-c]pyran-1-one + A. It participates in secondary metabolite biosynthesis. In terms of biological role, short-chain dehydrogenase/reductase; part of the gene cluster that mediates the biosynthesis of viriditoxin, one of the 'classical' secondary metabolites produced by fungi and that has antibacterial activity. The first step is performed by the polyketide synthase VdtA which condenses one acetyl-CoA and 6 malonyl-CoA units to form the heptaketide monomer backbone of viriditoxin. The product of VdtA is then O-methylated on C7 by the O-methyltransferase VdtC. The O-methyl group is important for the stereoselective coupling of the monomers at the final step of viriditoxin biosynthesis. The short-chain dehydrogenase/reductase VdtF then acts as a stereospecific reductase converting the pyrone to dihydropyrone via the reduction of the C3-C4 double bond. The FAD-binding monooxygenase VdtE then converts the ketone group into a methyl-ester group to yield semi-viriditoxin. Finally, the laccase VdtB is involved in dimerization of 2 semi-viriditoxin molecules to yield the final viriditoxin. VdtB is responsible for the regioselective 6,6'-coupling of semi-viriditoxin, which yields (M)-viriditoxin and (P)-viriditoxin at a ratio of 1:2. The non-catalytic carboxylesterase-like protein VdtD affects the stereochemistical outcome of the coupling. The highly reducing polyketide synthase VdtX is not involved in viriditoxin synthesis, but might possibly play a role in the production of additional metabolites not identified yet. The polypeptide is Short-chain dehydrogenase/reductase VdtF (Byssochlamys spectabilis (Paecilomyces variotii)).